The sequence spans 407 residues: Phenazine 1,6-dicarboxylic acid hydroxylase PhzS (407 aa).

3 residues coordinate FAD: Gly17, Val134, and Asp313.

FAD serves as cofactor.

The enzyme catalyses phenazine-1,6-dicarboxylate + NADH + O2 + 2 H(+) = 6-hydroxyphenazine-1-carboxylate + CO2 + NAD(+) + H2O. The catalysed reaction is 6-hydroxyphenazine-1-carboxylate + NADH + O2 + 2 H(+) = 1,6-dihydroxyphenazine + CO2 + NAD(+) + H2O. It carries out the reaction phenazine-1-carboxylate + NADH + O2 + 2 H(+) = 1-hydroxyphenazine + CO2 + NAD(+) + H2O. Involved in the biosynthesis of phenazine natural products including myxin, an N(5),N(10)-dioxide phenazine antiobiotic, which has antimicrobial activity. Catalyzes the decarboxylative hydroxylations of phenazine 1,6-dicarboxylic acid (PDC) to produce 1,6-dihydroxyphenazine (DHP). Low activity with phenazine 1-carboxylic acid (PCA) to produce 1-hydroxyphenazine. The chain is Phenazine 1,6-dicarboxylic acid hydroxylase PhzS from Lysobacter antibioticus.